A 538-amino-acid chain; its full sequence is CWF19-like protein 1 (538 aa).

2 disordered regions span residues 259-278 and 298-324; these read PDVTENPYRKSGQEASTGKQ and QGRKRSSTGRDSKSSPHPKQPRKPPQP.

It belongs to the CWF19 family.

This Pongo abelii (Sumatran orangutan) protein is CWF19-like protein 1 (CWF19L1).